The chain runs to 257 residues: NAD-capped RNA hydrolase NudC (257 aa).

Substrate-binding residues include K25 and R69. Residues C98 and C101 each coordinate Zn(2+). E111 is a substrate binding site. Zn(2+) is bound by residues C116 and C119. Residue Y124 coordinates substrate. One can recognise a Nudix hydrolase domain in the interval 125 to 248 (PQIAPCIIVA…TVARRLIEDT (124 aa)). Residues A158, E174, and E178 each coordinate a divalent metal cation. The Nudix box motif lies at 159-180 (GFVEVGETLEQAVAREVMEESG). 192–199 (QPWPFPQS) serves as a coordination point for substrate. E219 contacts a divalent metal cation. A241 lines the substrate pocket.

It belongs to the Nudix hydrolase family. NudC subfamily. Homodimer. Requires Mg(2+) as cofactor. Mn(2+) is required as a cofactor. The cofactor is Zn(2+).

It catalyses the reaction a 5'-end NAD(+)-phospho-ribonucleoside in mRNA + H2O = a 5'-end phospho-adenosine-phospho-ribonucleoside in mRNA + beta-nicotinamide D-ribonucleotide + 2 H(+). It carries out the reaction NAD(+) + H2O = beta-nicotinamide D-ribonucleotide + AMP + 2 H(+). The enzyme catalyses NADH + H2O = reduced beta-nicotinamide D-ribonucleotide + AMP + 2 H(+). In terms of biological role, mRNA decapping enzyme that specifically removes the nicotinamide adenine dinucleotide (NAD) cap from a subset of mRNAs by hydrolyzing the diphosphate linkage to produce nicotinamide mononucleotide (NMN) and 5' monophosphate mRNA. The NAD-cap is present at the 5'-end of some mRNAs and stabilizes RNA against 5'-processing. Has preference for mRNAs with a 5'-end purine. Catalyzes the hydrolysis of a broad range of dinucleotide pyrophosphates. This is NAD-capped RNA hydrolase NudC from Shigella dysenteriae serotype 1 (strain Sd197).